The chain runs to 136 residues: Large ribosomal subunit protein bL20 (136 aa).

Belongs to the bacterial ribosomal protein bL20 family.

Its function is as follows. Binds directly to 23S ribosomal RNA and is necessary for the in vitro assembly process of the 50S ribosomal subunit. It is not involved in the protein synthesizing functions of that subunit. The chain is Large ribosomal subunit protein bL20 from Tropheryma whipplei (strain TW08/27) (Whipple's bacillus).